Reading from the N-terminus, the 79-residue chain is Cell division protein ZapB (79 aa).

A coiled-coil region spans residues 4 to 78 (EVFEKLEAKV…LRALLGKMEE (75 aa)).

It belongs to the ZapB family. Homodimer. The ends of the coiled-coil dimer bind to each other, forming polymers. Interacts with FtsZ.

It localises to the cytoplasm. Functionally, non-essential, abundant cell division factor that is required for proper Z-ring formation. It is recruited early to the divisome by direct interaction with FtsZ, stimulating Z-ring assembly and thereby promoting cell division earlier in the cell cycle. Its recruitment to the Z-ring requires functional FtsA or ZipA. The chain is Cell division protein ZapB from Pectobacterium atrosepticum (strain SCRI 1043 / ATCC BAA-672) (Erwinia carotovora subsp. atroseptica).